A 246-amino-acid polypeptide reads, in one-letter code: CD99 antigen-like protein 2 (246 aa).

The signal sequence occupies residues 1–25; the sequence is MVARLTTLLVCLVFSLATLVQRGYG. The Extracellular portion of the chain corresponds to 26–160; the sequence is DFDDFNLEDA…PGSGAVTDPG (135 aa). The interval 43 to 156 is disordered; sequence KQSHFSTTTR…SQDDPGSGAV (114 aa). Low complexity-rich tracts occupy residues 49-58 and 71-81; these read TTTRRTGTTR and TTTTTKRPGTT. Residues 100 to 109 are compositionally biased toward basic and acidic residues; it reads DDRNDLDGPK. O-linked (Xyl...) (chondroitin sulfate) serine glycosylation occurs at serine 153. Residues 161–181 traverse the membrane as a helical segment; it reads TIAGLVSALAAALLGAVSGYL. The Cytoplasmic segment spans residues 182 to 246; that stretch reads SYQHRKFCFS…EPLAPERPRI (65 aa). Residues 223-246 are disordered; that stretch reads APPVTDSTQHSQPTEPLAPERPRI. Over residues 227–236 the composition is skewed to polar residues; the sequence is TDSTQHSQPT.

The protein belongs to the CD99 family. In terms of processing, O-glycosylated. As to expression, expressed predominantly in the ventral medullary surface of the brain, moderate expression in the cerebral cortex and cerebellum. Low expression in lung and kidney. No expression in heart, stomach, intestine and skeletal muscle.

It localises to the cell membrane. Its subcellular location is the cell junction. The protein resides in the secreted. Functionally, plays a role in a late step of leukocyte extravasation helping cells to overcome the endothelial basement membrane. Acts at the same site as, but independently of, PECAM1. Homophilic adhesion molecule, but these interactions may not be required for cell aggregation. This Rattus norvegicus (Rat) protein is CD99 antigen-like protein 2 (Cd99l2).